Reading from the N-terminus, the 86-residue chain is MAHKKGSGSTRNGRDSNSKRLGVKKYGGEQVTAGNILIRQRGTKVKPGQNVGKGKDDTLFALIDGFVLFEKSNQKQKTISVYSSKN.

Residues 1–27 are disordered; the sequence is MAHKKGSGSTRNGRDSNSKRLGVKKYG.

It belongs to the bacterial ribosomal protein bL27 family.

Its subcellular location is the plastid. It localises to the chloroplast. The polypeptide is Large ribosomal subunit protein bL27c (rpl27) (Porphyra purpurea (Red seaweed)).